A 140-amino-acid chain; its full sequence is ATP synthase epsilon chain (140 aa).

The protein belongs to the ATPase epsilon chain family. F-type ATPases have 2 components, CF(1) - the catalytic core - and CF(0) - the membrane proton channel. CF(1) has five subunits: alpha(3), beta(3), gamma(1), delta(1), epsilon(1). CF(0) has three main subunits: a, b and c.

Its subcellular location is the cell membrane. Functionally, produces ATP from ADP in the presence of a proton gradient across the membrane. This chain is ATP synthase epsilon chain, found in Baumannia cicadellinicola subsp. Homalodisca coagulata.